A 170-amino-acid polypeptide reads, in one-letter code: Thioredoxin-like protein YneN (170 aa).

A helical membrane pass occupies residues 5-23; it reads WLAGILLIMLVGYTGWNLY. In terms of domain architecture, Thioredoxin spans 33–170; it reads IQEGQQAPDF…KEMEQKLDLD (138 aa). Cysteines 71 and 74 form a disulfide.

It belongs to the thioredoxin family.

Its subcellular location is the cell membrane. In Bacillus subtilis (strain 168), this protein is Thioredoxin-like protein YneN (yneN).